A 156-amino-acid chain; its full sequence is Small ribosomal subunit protein uS7 (156 aa).

It belongs to the universal ribosomal protein uS7 family. As to quaternary structure, part of the 30S ribosomal subunit. Contacts proteins S9 and S11.

Its function is as follows. One of the primary rRNA binding proteins, it binds directly to 16S rRNA where it nucleates assembly of the head domain of the 30S subunit. Is located at the subunit interface close to the decoding center, probably blocks exit of the E-site tRNA. The polypeptide is Small ribosomal subunit protein uS7 (Clavibacter michiganensis subsp. michiganensis (strain NCPPB 382)).